The following is a 940-amino-acid chain: Translation initiation factor IF-2 (940 aa).

Disordered stretches follow at residues proline 116–threonine 137, glutamate 151–serine 196, alanine 210–valine 294, and histidine 318–arginine 346. Over residues leucine 121–threonine 137 the composition is skewed to polar residues. Acidic residues predominate over residues proline 159 to glutamate 180. The segment covering proline 181–glutamate 193 has biased composition (low complexity). Basic and acidic residues predominate over residues lysine 213–alanine 239. Residues lysine 282–valine 294 show a composition bias toward basic residues. Over residues glycine 326–serine 337 the composition is skewed to low complexity. Residues alanine 441 to serine 610 enclose the tr-type G domain. The G1 stretch occupies residues glycine 450 to threonine 457. Glycine 450–threonine 457 serves as a coordination point for GTP. The G2 stretch occupies residues glycine 475–histidine 479. Residues aspartate 496 to glycine 499 are G3. Residues aspartate 496–histidine 500 and asparagine 550–aspartate 553 each bind GTP. A G4 region spans residues asparagine 550 to aspartate 553. The G5 stretch occupies residues serine 586–glutamine 588.

This sequence belongs to the TRAFAC class translation factor GTPase superfamily. Classic translation factor GTPase family. IF-2 subfamily.

The protein localises to the cytoplasm. In terms of biological role, one of the essential components for the initiation of protein synthesis. Protects formylmethionyl-tRNA from spontaneous hydrolysis and promotes its binding to the 30S ribosomal subunits. Also involved in the hydrolysis of GTP during the formation of the 70S ribosomal complex. This is Translation initiation factor IF-2 from Teredinibacter turnerae (strain ATCC 39867 / T7901).